Consider the following 343-residue polypeptide: MLVVQMPFSFPMAHFILFVFTVSTIFHVQQRLAKIQAMWELPVQIPVLASTSKALGPSQLRGMWTINAIGRLGNQMGEYATLYALAKMNGRPAFIPAQMHSTLAPIFRITLPVLHSATASRIPWQNYHLNDWMEEEYRHIPGEYVRFTGYPCSWTFYHHLRQEILQEFTLHDHVREEAQKFLRGLQVNGSQPGTFVGVHVRRGDYVHVMPKVWKGVVADRRYLQQALDWFRARYSSPIFVVTSNGMAWCRENIDTSHGDVVFAGDGIEGSPAKDFALLTQCNHTIMTIGTFGIWAAYLTGGDTIYLANYTLPDSPFLKIFKPEAAFLPEWTGIAADLSPLLKH.

Over 1 to 14 (MLVVQMPFSFPMAH) the chain is Cytoplasmic. The helical; Signal-anchor for type II membrane protein transmembrane segment at 15–28 (FILFVFTVSTIFHV) threads the bilayer. Over 29 to 343 (QQRLAKIQAM…AADLSPLLKH (315 aa)) the chain is Lumenal. N-linked (GlcNAc...) asparagine glycosylation is found at Asn188, Asn282, and Asn308.

This sequence belongs to the glycosyltransferase 11 family.

It localises to the golgi apparatus. The protein localises to the golgi stack membrane. It carries out the reaction a beta-D-galactosyl-(1-&gt;3)-N-acetyl-beta-D-glucosaminyl derivative + GDP-beta-L-fucose = an alpha-L-Fuc-(1-&gt;2)-beta-D-Gal-(1-&gt;3)-beta-D-GlcNAc derivative + GDP + H(+). It catalyses the reaction a beta-D-galactosyl-(1-&gt;4)-N-acetyl-beta-D-glucosaminyl derivative + GDP-beta-L-fucose = an alpha-L-Fuc-(1-&gt;2)-beta-D-Gal-(1-&gt;4)-beta-D-GlcNAc derivative + GDP + H(+). The catalysed reaction is a neolactoside nLc4Cer + GDP-beta-L-fucose = a neolactoside IV(2)-alpha-Fuc-nLc4Cer + GDP + H(+). The enzyme catalyses a neolactoside nLc4Cer(d18:1(4E)) + GDP-beta-L-fucose = a neolactoside IV(2)-alpha-Fuc-nLc4Cer(d18:1(4E)) + GDP + H(+). It carries out the reaction a ganglioside GM1 + GDP-beta-L-fucose = a ganglioside Fuc-GM1 + GDP + H(+). It catalyses the reaction a ganglioside GA1 + GDP-beta-L-fucose = a ganglioside Fuc-GA1 + GDP + H(+). The catalysed reaction is Lc4Cer + GDP-beta-L-fucose = alpha-L-fucosyl-(1-&gt;2)-beta-D-galactosyl-(1-&gt;3)-N-acetyl-beta-D-glucosaminyl-(1-&gt;3)-beta-D-galactosyl-(1-&gt;4)-beta-D-glucosyl-(1&lt;-&gt;1')-ceramide + GDP + H(+). The enzyme catalyses a beta-D-Gal-(1-&gt;3)-beta-D-GlcNAc-(1-&gt;3)-beta-D-Gal-(1-&gt;4)-beta-D-Glc-(1&lt;-&gt;1')-Cer(d18:1(4E)) + GDP-beta-L-fucose = alpha-L-fucosyl-(1-&gt;2)- beta-D-galactosyl-(1-&gt;3)-N-acetyl-beta-D-glucosaminyl-(1-&gt;3)-beta-D-galactosyl-(1-&gt;4)-beta-D-glucosyl-(1&lt;-&gt;1')-N-acylsphing-4-enine + GDP + H(+). It carries out the reaction a ganglioside GD1b + GDP-beta-L-fucose = a ganglioside Fuc-GD1b + GDP + H(+). It catalyses the reaction a ganglioside GM1 (d18:1(4E)) + GDP-beta-L-fucose = a ganglioside Fuc-GM1 (d18:1(4E)) + GDP + H(+). The catalysed reaction is a globoside GalGb4Cer (d18:1(4E)) + GDP-beta-L-fucose = a globoside Globo-H (d18:1(4E)) + GDP + H(+). The enzyme catalyses a lactoside III(4)-a-Fuc-Lc4Cer + GDP-beta-L-fucose = a lactoside IV(2),III(4)-a-[Fuc]2-Lc4Cer + GDP + H(+). It carries out the reaction beta-D-galactosyl-(1-&gt;3)-N-acetyl-D-galactosamine + GDP-beta-L-fucose = alpha-L-fucosyl-(1-&gt;2)-beta-D-galactosyl-(1-&gt;3)-N-acetyl-D-galactosamine + GDP + H(+). It participates in protein modification; protein glycosylation. Functionally, catalyzes the transfer of L-fucose, from a guanosine diphosphate-beta-L-fucose, to the terminal galactose on both O- and N-linked glycans chains of cell surface glycoproteins and glycolipids and the resulting epitope regulates several processes such as cell-cell interaction including host-microbe interaction, cell surface expression and cell proliferation. Preferentially fucosylates gangliosides GA1 and GM1 in the antrum, cecum and colon and in the female reproductive organs. Fucosylated host glycoproteins or glycolipids mediate interaction with intestinal microbiota influencing its composition. Creates a soluble precursor oligosaccharide FuC-alpha ((1,2)Galbeta-) called the H antigen which is an essential substrate for the final step in the soluble ABO blood group antigen synthesis pathway. This chain is Galactoside alpha-(1,2)-fucosyltransferase 2, found in Gorilla gorilla gorilla (Western lowland gorilla).